We begin with the raw amino-acid sequence, 182 residues long: Large ribosomal subunit protein uL6 (182 aa).

This sequence belongs to the universal ribosomal protein uL6 family. In terms of assembly, part of the 50S ribosomal subunit.

Its function is as follows. This protein binds to the 23S rRNA, and is important in its secondary structure. It is located near the subunit interface in the base of the L7/L12 stalk, and near the tRNA binding site of the peptidyltransferase center. The sequence is that of Large ribosomal subunit protein uL6 from Carboxydothermus hydrogenoformans (strain ATCC BAA-161 / DSM 6008 / Z-2901).